The chain runs to 61 residues: Conotoxin TxMRCL-04 (61 aa).

A signal peptide spans 1-22 (MRCLPVFVILLLLIASTPSVDA). Residues 23 to 46 (QLKTKDDMSLASFHDNVKRILQIR) constitute a propeptide that is removed on maturation.

This sequence belongs to the conotoxin T superfamily. Contains 2 disulfide bonds that can be either 'C1-C3, C2-C4' or 'C1-C4, C2-C3', since these disulfide connectivities have been observed for conotoxins with cysteine framework V (for examples, see AC P0DQQ7 and AC P81755). In terms of tissue distribution, expressed by the venom duct.

Its subcellular location is the secreted. The sequence is that of Conotoxin TxMRCL-04 from Conus textile (Cloth-of-gold cone).